The chain runs to 131 residues: UPF0102 protein YraN (131 aa).

It belongs to the UPF0102 family.

The polypeptide is UPF0102 protein YraN (Salmonella arizonae (strain ATCC BAA-731 / CDC346-86 / RSK2980)).